The sequence spans 1115 residues: MTMMTPPPLDQQEDEEMLVPNPDLVEGPQPMEVAQTDPAATAVENPPPEDPPSLKFTWTIPMFTRLNTRKHYSDVFVVGGYKWRILIFPKGNNVDHLSMYLDVADAANLPYGWSRYSQFSLAVVNQVNNRYSIRKETQHQFNARESDWGFTSFMPLSELYEPTRGYLVNDTVLIEAEVAVRKVLDYWSYDSKKETGFVGLKNQGATCYMNSLLQTLYHIPYFRKAVYHMPTTENDAPTASIPLALQSLFYKLQYNDTSVATKELTKSFGWDTYDSFMQHDVQELNRVLCEKLEDKMKGTVVEGTIQKLFEGHHMNYIECINVDYKSTRKESFYDLQLDVKGCKDVYASFDKYVEVERLEGDNKYHAEGHDLQDAKKGVLFIDFPPVLQLQLKRFEYDFMRDTMVKINDRYEFPLQLDLDREDGRYLSPDADKSVRNLYTLHSVLVHSGGVHGGHYYAFIRPTLSDQWYKFDDERVTKEDVKRALEEQYGGEEELPQNNPGFNNPPFKFTKYSNAYMLVYIRESDKDKIICNVDEKDIAEHLRVRLKKEQEEKEDKRKYKAQAHLFTTIKVARDDDITEQIGKNIYFDLVDHEKVRSFRIQKQTPFQQFKEEVAKEFGVPVQLQRFWIWAKRQNHTYRPNRPLSPNEELQTVGQIREASNKANNAELKLFLEIERGPDDLPIPPPEKTSEDILLFFKLYDPENAVLRYVGRLMVKSSSKPMDIVGQLNKMAGFAPDEEIELFEEIKFEPCVMCEQIDKKTSFRLCQIEDGDIICYQKPLSIEESEFRYPDVPSFLEYVQNRELVRFRTLEKPKEDEFTMELSKLHTYDDVVERVAEKLGLDDPSKLRLTSHNCYSQQPKPQPIKYRGVDHLSDMLVHYNQTSDILYYEVLDIPLPELQGLKTLKVAFHSATKDEVIIHNIRLPKQSTVGDVINELKTKVELSHQDAELRLLEVFFHKIYKIFPSTERIENINDQYWTLRAEEIPEEEKNIGPNDRLIHVYHFTKEAGQNQQVQNFGEPFFLVIHEGETLEEIKTRIQKKLHVPDEDFAKWKFASFSMGRPDYLLDTDVVYNRFQRRDVYGAWEQYLGLEHIDNAPKRAYAANQNRHAYEKPVKIYN.

The disordered stretch occupies residues 1–51 (MTMMTPPPLDQQEDEEMLVPNPDLVEGPQPMEVAQTDPAATAVENPPPEDP). One can recognise an MATH domain in the interval 53–178 (SLKFTWTIPM…NDTVLIEAEV (126 aa)). One can recognise a USP domain in the interval 198–522 (VGLKNQGATC…NAYMLVYIRE (325 aa)). The active-site Nucleophile is Cys-207. Catalysis depends on His-454, which acts as the Proton acceptor.

The protein belongs to the peptidase C19 family. In terms of assembly, interacts with SIC/RON3. Interacts with RGI1 and RGI2.

The catalysed reaction is Thiol-dependent hydrolysis of ester, thioester, amide, peptide and isopeptide bonds formed by the C-terminal Gly of ubiquitin (a 76-residue protein attached to proteins as an intracellular targeting signal).. In terms of biological role, recognizes and hydrolyzes the peptide bond at the C-terminal Gly of ubiquitin. Involved in the processing of poly-ubiquitin precursors as well as that of ubiquitinated proteins. Positive regulator of root meristem development that, together with UBP12, prevents the ubiquitination and turnover of RGFR1 induced by the RGF1 hormone peptide, thus influencing PLT1 and PLT2 expression. This Arabidopsis thaliana (Mouse-ear cress) protein is Ubiquitin C-terminal hydrolase 13.